Consider the following 120-residue polypeptide: MAYRKLGRTSAQRKAMLRDLATDLIINERIQTTETRAKELRSVVEKMITLGKRGDLHARRQAAAFIRNEVANAETGQDALQKLFADVAPRYAERQGGYTRIAKIGPRRGDAAPMVIIELV.

It belongs to the bacterial ribosomal protein bL17 family. Part of the 50S ribosomal subunit. Contacts protein L32.

This chain is Large ribosomal subunit protein bL17, found in Bacillus cereus (strain ATCC 14579 / DSM 31 / CCUG 7414 / JCM 2152 / NBRC 15305 / NCIMB 9373 / NCTC 2599 / NRRL B-3711).